The primary structure comprises 296 residues: Aspartate carbamoyltransferase catalytic subunit (296 aa).

Positions 50 and 51 each coordinate carbamoyl phosphate. Lysine 79 is a binding site for L-aspartate. Residues arginine 100, histidine 128, and glutamine 131 each contribute to the carbamoyl phosphate site. The L-aspartate site is built by arginine 161 and arginine 219. Residues leucine 258 and proline 259 each contribute to the carbamoyl phosphate site.

The protein belongs to the aspartate/ornithine carbamoyltransferase superfamily. ATCase family. As to quaternary structure, heterooligomer of catalytic and regulatory chains.

The catalysed reaction is carbamoyl phosphate + L-aspartate = N-carbamoyl-L-aspartate + phosphate + H(+). It functions in the pathway pyrimidine metabolism; UMP biosynthesis via de novo pathway; (S)-dihydroorotate from bicarbonate: step 2/3. In terms of biological role, catalyzes the condensation of carbamoyl phosphate and aspartate to form carbamoyl aspartate and inorganic phosphate, the committed step in the de novo pyrimidine nucleotide biosynthesis pathway. This chain is Aspartate carbamoyltransferase catalytic subunit, found in Korarchaeum cryptofilum (strain OPF8).